A 482-amino-acid polypeptide reads, in one-letter code: Putative L-cysteine desulfhydrase 1 (482 aa).

The segment covering 1–10 (MASIPPDDDA) has biased composition (acidic residues). The segment at 1 to 45 (MASIPPDDDAAAAAAAGAAENGYGNGKGNGNGPAPRPPPAKRPRS) is disordered. The segment covering 11-22 (AAAAAAGAAENG) has biased composition (low complexity). Lys-276 bears the N6-(pyridoxal phosphate)lysine mark.

It belongs to the class-V pyridoxal-phosphate-dependent aminotransferase family. Pyridoxal 5'-phosphate is required as a cofactor.

The catalysed reaction is L-cysteine + H2O = hydrogen sulfide + pyruvate + NH4(+) + H(+). In terms of biological role, catalyzes the production of hydrogen sulfide (H2S) from cysteine. The sequence is that of Putative L-cysteine desulfhydrase 1 from Oryza sativa subsp. japonica (Rice).